The sequence spans 87 residues: Sec-independent protein translocase protein TatA (87 aa).

The helical transmembrane segment at 1-21 (MGGMSITHWIVVAVVVMIFFG) threads the bilayer. Residues 40–87 (KKGMSEDDTTPPAAPPAPAPRLENQPLPPENTTQNVAQNVPNDIKNNQ) form a disordered region. The span at 69–87 (ENTTQNVAQNVPNDIKNNQ) shows a compositional bias: polar residues.

The protein belongs to the TatA/E family. In terms of assembly, the Tat system comprises two distinct complexes: a TatABC complex, containing multiple copies of TatA, TatB and TatC subunits, and a separate TatA complex, containing only TatA subunits. Substrates initially bind to the TatABC complex, which probably triggers association of the separate TatA complex to form the active translocon.

It localises to the cell inner membrane. Its function is as follows. Part of the twin-arginine translocation (Tat) system that transports large folded proteins containing a characteristic twin-arginine motif in their signal peptide across membranes. TatA could form the protein-conducting channel of the Tat system. This Zymomonas mobilis subsp. mobilis (strain ATCC 31821 / ZM4 / CP4) protein is Sec-independent protein translocase protein TatA.